A 305-amino-acid polypeptide reads, in one-letter code: Ferrochelatase (305 aa).

Positions 182 and 262 each coordinate Fe cation.

Belongs to the ferrochelatase family.

The protein localises to the cytoplasm. It catalyses the reaction heme b + 2 H(+) = protoporphyrin IX + Fe(2+). The protein operates within porphyrin-containing compound metabolism; protoheme biosynthesis; protoheme from protoporphyrin-IX: step 1/1. In terms of biological role, catalyzes the ferrous insertion into protoporphyrin IX. This chain is Ferrochelatase, found in Herpetosiphon aurantiacus (strain ATCC 23779 / DSM 785 / 114-95).